A 56-amino-acid chain; its full sequence is Ribosome modulation factor (56 aa).

It belongs to the ribosome modulation factor family.

It is found in the cytoplasm. Functionally, during stationary phase, converts 70S ribosomes to an inactive dimeric form (100S ribosomes). This is Ribosome modulation factor from Serratia proteamaculans (strain 568).